We begin with the raw amino-acid sequence, 184 residues long: NADH-quinone oxidoreductase subunit B 1 (184 aa).

4 residues coordinate [4Fe-4S] cluster: C37, C38, C103, and C132.

It belongs to the complex I 20 kDa subunit family. As to quaternary structure, NDH-1 is composed of 14 different subunits. Subunits NuoB, C, D, E, F, and G constitute the peripheral sector of the complex. [4Fe-4S] cluster serves as cofactor.

Its subcellular location is the cell membrane. It carries out the reaction a quinone + NADH + 5 H(+)(in) = a quinol + NAD(+) + 4 H(+)(out). In terms of biological role, NDH-1 shuttles electrons from NADH, via FMN and iron-sulfur (Fe-S) centers, to quinones in the respiratory chain. The immediate electron acceptor for the enzyme in this species is believed to be a menaquinone. Couples the redox reaction to proton translocation (for every two electrons transferred, four hydrogen ions are translocated across the cytoplasmic membrane), and thus conserves the redox energy in a proton gradient. This chain is NADH-quinone oxidoreductase subunit B 1, found in Streptomyces coelicolor (strain ATCC BAA-471 / A3(2) / M145).